A 172-amino-acid polypeptide reads, in one-letter code: Protein-export protein SecB (172 aa).

Belongs to the SecB family. Homotetramer, a dimer of dimers. One homotetramer interacts with 1 SecA dimer.

Its subcellular location is the cytoplasm. Its function is as follows. One of the proteins required for the normal export of preproteins out of the cell cytoplasm. It is a molecular chaperone that binds to a subset of precursor proteins, maintaining them in a translocation-competent state. It also specifically binds to its receptor SecA. In Dinoroseobacter shibae (strain DSM 16493 / NCIMB 14021 / DFL 12), this protein is Protein-export protein SecB.